The following is a 318-amino-acid chain: sn-1 stearoyl-lipid 9-desaturase (318 aa).

2 consecutive transmembrane segments (helical) span residues 56–76 (VIFFFTSIHLVALLAFLPQFF) and 80–100 (AVGMAFLLYVITGGIGITLGF). Positions 101-106 (HRCISH) match the Histidine box-1 motif. A helical membrane pass occupies residues 117–137 (YIFVICGTLACQGGVFEWVGL). Positions 138 to 142 (HRMHH) match the Histidine box-2 motif. Residues 201–221 (VALGLILFALGGWPFVIWGIF) traverse the membrane as a helical segment. Residues 271-275 (HHAYQ) carry the Histidine box-3 motif.

It belongs to the fatty acid desaturase type 2 family. The cofactor is Fe(2+).

The protein localises to the cellular thylakoid membrane. It carries out the reaction a 1-octadecanoyl 2-acyl-glycerolipid + 2 reduced [2Fe-2S]-[ferredoxin] + O2 + 2 H(+) = a 1-[(9Z)-octadecenoyl]-2-acyl-glycerolipid + 2 oxidized [2Fe-2S]-[ferredoxin] + 2 H2O. Its pathway is lipid metabolism; polyunsaturated fatty acid biosynthesis. In terms of biological role, desaturase involved in fatty acid biosynthesis. Introduces a double bond at carbon 9 of stearoyl groups (18:0) attached to the sn-1 position of the glycerol moiety of membrane glycerolipids. Does not desaturate palmitic acid (16:0), palmitoleic acid (16:1) and cis-vaccenic acid (18:1). This chain is sn-1 stearoyl-lipid 9-desaturase, found in Synechocystis sp. (strain ATCC 27184 / PCC 6803 / Kazusa).